Consider the following 153-residue polypeptide: Ribonuclease K3 (153 aa).

Positions 1 to 26 are cleaved as a signal peptide; sequence MGPDLRCFPLLLLLLGLWWSVRPLCA. Asn30 carries an N-linked (GlcNAc...) asparagine glycan. Residue His41 is the Proton acceptor of the active site. 4 disulfide bridges follow: Cys49/Cys107, Cys63/Cys117, Cys81/Cys132, and Cys88/Cys95. Asn58 is a glycosylation site (N-linked (GlcNAc...) asparagine). 64 to 68 contributes to the substrate binding site; the sequence is KPQNT. A glycan (N-linked (GlcNAc...) asparagine) is linked at Asn85. A substrate-binding site is contributed by Lys89. His148 acts as the Proton donor in catalysis.

Belongs to the pancreatic ribonuclease family. In terms of assembly, interacts (via N-terminus) with bacterial lipopolysaccharide (LPS). Kidney.

Its subcellular location is the secreted. It localises to the lysosome. It is found in the cytoplasmic granule. Its function is as follows. Ribonuclease which shows a preference for the pyrimidines uridine and cytosine. Has potent antibacterial activity against a range of Gram-positive and Gram-negative bacteria, including P.aeruginosa, A.baumanii, M.luteus, S.aureus, E.faecalis, E.faecium, S.saprophyticus and E.coli. Causes loss of bacterial membrane integrity, and also promotes agglutination of Gram-negative bacteria. Probably contributes to urinary tract sterility. Bactericidal activity is independent of RNase activity. The chain is Ribonuclease K3 (RNASE6) from Sus scrofa (Pig).